Consider the following 780-residue polypeptide: Reticulon-1 (780 aa).

Disordered regions lie at residues 1–76 (MAAP…VAME), 128–176 (QKEN…AEST), 201–223 (RPQEAKGQEEQHPGLEDKDLDFK), and 293–576 (MTAT…IPGP). Residues Ser-13 and Ser-70 each carry the phosphoserine modification. Residue Ser-327 is modified to Phosphoserine. Positions 328–341 (PGSVTPPSSGTEPS) are enriched in low complexity. A phosphoserine mark is found at Ser-350, Ser-352, and Ser-487. Residues 497–512 (AIREETGSRATEERAP) show a composition bias toward basic and acidic residues. Residues 593-780 (AIDLLYWRDI…KIPGAKRHAE (188 aa)) enclose the Reticulon domain. Transmembrane regions (helical) follow at residues 607–627 (IVFGSFLLLLFSLTQFSVVSV) and 709–729 (FAVLMWLLTYVGALFNGLTLL).

As to quaternary structure, interacts with NDRG1. Interacts with BACE1. Interacts with TMEM33.

Its subcellular location is the endoplasmic reticulum membrane. The protein localises to the golgi apparatus membrane. Inhibits amyloid precursor protein processing, probably by blocking BACE1 activity. This Mus musculus (Mouse) protein is Reticulon-1 (Rtn1).